Reading from the N-terminus, the 64-residue chain is Beta-defensin 1 (64 aa).

The signal sequence occupies residues 1–22; that stretch reads MRLHHLLLVLFFVVLSAGSGFT. Cystine bridges form between cysteine 31–cysteine 60, cysteine 38–cysteine 53, and cysteine 43–cysteine 61.

Belongs to the beta-defensin family. In terms of assembly, monomer. Homodimer.

It is found in the secreted. The protein resides in the membrane. Functionally, has bactericidal activity. May act as a ligand for C-C chemokine receptor CCR6. Positively regulates the sperm motility and bactericidal activity in a CCR6-dependent manner. Binds to CCR6 and triggers Ca2+ mobilization in the sperm which is important for its motility. This chain is Beta-defensin 1 (DEFB1), found in Ovis aries (Sheep).